We begin with the raw amino-acid sequence, 384 residues long: Queuine tRNA-ribosyltransferase (384 aa).

The Proton acceptor role is filled by D92. Residues 92–96 (DSGGF), D146, Q190, and G217 contribute to the substrate site. An RNA binding region spans residues 248 to 254 (GVGRPED). The active-site Nucleophile is D267. The interval 272 to 276 (TRHAR) is RNA binding; important for wobble base 34 recognition. Zn(2+) is bound by residues C305, C307, C310, and H337.

This sequence belongs to the queuine tRNA-ribosyltransferase family. Homodimer. Within each dimer, one monomer is responsible for RNA recognition and catalysis, while the other monomer binds to the replacement base PreQ1. Requires Zn(2+) as cofactor.

The catalysed reaction is 7-aminomethyl-7-carbaguanine + guanosine(34) in tRNA = 7-aminomethyl-7-carbaguanosine(34) in tRNA + guanine. It functions in the pathway tRNA modification; tRNA-queuosine biosynthesis. Functionally, catalyzes the base-exchange of a guanine (G) residue with the queuine precursor 7-aminomethyl-7-deazaguanine (PreQ1) at position 34 (anticodon wobble position) in tRNAs with GU(N) anticodons (tRNA-Asp, -Asn, -His and -Tyr). Catalysis occurs through a double-displacement mechanism. The nucleophile active site attacks the C1' of nucleotide 34 to detach the guanine base from the RNA, forming a covalent enzyme-RNA intermediate. The proton acceptor active site deprotonates the incoming PreQ1, allowing a nucleophilic attack on the C1' of the ribose to form the product. After dissociation, two additional enzymatic reactions on the tRNA convert PreQ1 to queuine (Q), resulting in the hypermodified nucleoside queuosine (7-(((4,5-cis-dihydroxy-2-cyclopenten-1-yl)amino)methyl)-7-deazaguanosine). This chain is Queuine tRNA-ribosyltransferase, found in Xylella fastidiosa (strain M12).